The sequence spans 464 residues: Glycine receptor subunit alpha-3 (464 aa).

The N-terminal stretch at 1–33 (MAHVRHFRTLVSGFYFWEAALLLSLVATKETNS) is a signal peptide. The Extracellular portion of the chain corresponds to 34 to 255 (ARSRSAPMSP…RFHLERQMGY (222 aa)). A glycan (N-linked (GlcNAc...) asparagine) is linked at Asn71. Residues Cys171 and Cys185 are joined by a disulfide bond. Residues Glu225 and Asp227 each contribute to the Zn(2+) site. Cys231 and Cys242 are oxidised to a cystine. 235–240 (YNTGKF) lines the strychnine pocket. A Zn(2+)-binding site is contributed by His248. A helical transmembrane segment spans residues 256-277 (YLIQMYIPSLLIVILSWVSFWI). The Cytoplasmic portion of the chain corresponds to 278-282 (NMDAA). A helical transmembrane segment spans residues 283-303 (PARVALGITTVLTMTTQSSGS). The Extracellular portion of the chain corresponds to 304 to 314 (RASLPKVSYVK). A helical transmembrane segment spans residues 315 to 335 (AIDIWMAVCLLFVFSALLEYA). At 336–430 (AVNFVSRQHK…FIDRAKKIDT (95 aa)) the chain is on the cytoplasmic side. Position 370 is a phosphoserine (Ser370). Ser379 bears the Phosphoserine; by PKA mark. A helical membrane pass occupies residues 431-451 (ISRACFPLAFLIFNIFYWVIY). Residues 452 to 464 (KILRHEDIHQQQD) are Extracellular-facing.

This sequence belongs to the ligand-gated ion channel (TC 1.A.9) family. Glycine receptor (TC 1.A.9.3) subfamily. GLRA3 sub-subfamily. As to quaternary structure, homopentamer (in vitro). Heteropentamer composed of GLRA3 and GLRB. Both homopentamers and heteropentamers form functional ion channels, but their characteristics are subtly different. Post-translationally, phosphorylated by PKA; this causes down-regulation of channel activity. Dephosphorylated in response to activation of HTR1A signaling; this increases channel activity. Detected in brainstem, also in neurons that control rhythmic breathing. Detected in superficial laminae of the dorsal horn of the thoracic spinal cord. Detected in dentate gyrus in hippocampus, especially in stratum granulare. Detected in the inner plexiform layer in the retina (at protein level). Detected in midbrain, thalamus, brain cortex, hippocampus, and at lower levels in cerebellum.

The protein localises to the postsynaptic cell membrane. Its subcellular location is the synapse. It is found in the perikaryon. The protein resides in the cell projection. It localises to the dendrite. The protein localises to the cell membrane. The enzyme catalyses chloride(in) = chloride(out). Its activity is regulated as follows. Inhibited by prostaglandin E2, probably via PKA-mediated phosphorylation at Ser-379. Glycine receptors are ligand-gated chloride channels. Channel opening is triggered by extracellular glycine. Channel characteristics depend on the subunit composition; heteropentameric channels display faster channel closure. Plays an important role in the down-regulation of neuronal excitability. Contributes to the generation of inhibitory postsynaptic currents. Contributes to increased pain perception in response to increased prostaglandin E2 levels. Plays a role in the regulation of breathing rhythm, especially of the duration of the postinspiratory phase. Plays a role in cellular responses to ethanol. The polypeptide is Glycine receptor subunit alpha-3 (Glra3) (Mus musculus (Mouse)).